The primary structure comprises 258 residues: Type III pantothenate kinase (258 aa).

9-16 is a binding site for ATP; sequence DIGNTSVN. Position 110 to 113 (110 to 113) interacts with substrate; the sequence is GADR. Residue Asp-112 is the Proton acceptor of the active site. Asp-132 is a binding site for K(+). Thr-135 is an ATP binding site. A substrate-binding site is contributed by Thr-187.

The protein belongs to the type III pantothenate kinase family. As to quaternary structure, homodimer. NH4(+) is required as a cofactor. Requires K(+) as cofactor.

Its subcellular location is the cytoplasm. The enzyme catalyses (R)-pantothenate + ATP = (R)-4'-phosphopantothenate + ADP + H(+). Its pathway is cofactor biosynthesis; coenzyme A biosynthesis; CoA from (R)-pantothenate: step 1/5. In terms of biological role, catalyzes the phosphorylation of pantothenate (Pan), the first step in CoA biosynthesis. This chain is Type III pantothenate kinase, found in Dehalococcoides mccartyi (strain ATCC BAA-2266 / KCTC 15142 / 195) (Dehalococcoides ethenogenes (strain 195)).